The following is a 733-amino-acid chain: Methylmalonyl-CoA mutase large subunit (733 aa).

The segment covering 1-10 (MRIPEFDDIE) has biased composition (acidic residues). A disordered region spans residues 1-22 (MRIPEFDDIELGAGGGPSGSAE). (R)-methylmalonyl-CoA is bound by residues tyrosine 78, methionine 81, threonine 88, arginine 90, tyrosine 92, and serine 117. Residues phenylalanine 120 and alanine 142 each coordinate cob(II)alamin. Residues threonine 198 and glutamine 200 each contribute to the (R)-methylmalonyl-CoA site. Cob(II)alamin contacts are provided by valine 209 and arginine 210. (R)-methylmalonyl-CoA is bound by residues arginine 210, histidine 247, arginine 286, and serine 288. Residues glycine 336, glutamate 373, alanine 376, glycine 612, histidine 613, aspartate 614, arginine 615, serine 658, leucine 660, glycine 689, and threonine 712 each contribute to the cob(II)alamin site. The B12-binding domain occupies 600 to 732 (RPRILVAKMG…KRLAADLGHE (133 aa)).

It belongs to the methylmalonyl-CoA mutase family. As to quaternary structure, heterodimer of an alpha and a beta chain. Adenosylcob(III)alamin is required as a cofactor.

It carries out the reaction (R)-methylmalonyl-CoA = succinyl-CoA. In terms of biological role, catalyzes the isomerization of succinyl-CoA to methylmalonyl-CoA during synthesis of propionate from tricarboxylic acid-cycle intermediates. This conversion most likely represents an important source of building blocks for polyketide antibiotic biosynthesis. It is unable to catalyze the conversion of isobutyryl-CoA into N-butyryl-CoA. This Streptomyces virginiae (Streptomyces cinnamonensis) protein is Methylmalonyl-CoA mutase large subunit (mutB).